Here is a 208-residue protein sequence, read N- to C-terminus: Small ribosomal subunit protein uS4 (208 aa).

Positions arginine 98 to asparagine 159 constitute an S4 RNA-binding domain.

This sequence belongs to the universal ribosomal protein uS4 family. Part of the 30S ribosomal subunit. Contacts protein S5. The interaction surface between S4 and S5 is involved in control of translational fidelity.

Functionally, one of the primary rRNA binding proteins, it binds directly to 16S rRNA where it nucleates assembly of the body of the 30S subunit. With S5 and S12 plays an important role in translational accuracy. The polypeptide is Small ribosomal subunit protein uS4 (Desulfatibacillum aliphaticivorans).